We begin with the raw amino-acid sequence, 222 residues long: Ribonuclease T (222 aa).

The Exonuclease domain occupies 20-194 (VVIDVETAGF…YDTERTAELF (175 aa)). Mg(2+)-binding residues include aspartate 23, glutamate 25, histidine 181, and aspartate 186. Histidine 181 serves as the catalytic Proton donor/acceptor.

It belongs to the RNase T family. Homodimer. It depends on Mg(2+) as a cofactor.

Functionally, trims short 3' overhangs of a variety of RNA species, leaving a one or two nucleotide 3' overhang. Responsible for the end-turnover of tRNA: specifically removes the terminal AMP residue from uncharged tRNA (tRNA-C-C-A). Also appears to be involved in tRNA biosynthesis. This chain is Ribonuclease T, found in Shewanella sp. (strain MR-4).